The chain runs to 349 residues: Aquaporin-4 (349 aa).

2 helical membrane-spanning segments follow: residues 92–112 (LSES…AATA) and 125–147 (AFYH…GGLL). Residues 148-150 (NPA) carry the NPA 1 motif. A helical transmembrane segment spans residues 167 to 187 (LIYMSAQYFGAFIASAVVYLI). 2 N-linked (GlcNAc...) asparagine glycosylation sites follow: Asn194 and Asn207. The next 2 helical transmembrane spans lie at 225–245 (GAIF…LSIC) and 256–276 (MFPF…SYSA). The NPA 2 signature appears at 281–283 (NPA). A helical membrane pass occupies residues 314-334 (WLFPYVGALLGGVIYEIFIGI).

The protein belongs to the MIP/aquaporin (TC 1.A.8) family.

It is found in the cell membrane. In terms of biological role, aquaglyceroporin that may modulate the water content and osmolytes during anhydrobiosis. This chain is Aquaporin-4, found in Milnesium tardigradum (Water bear).